A 306-amino-acid polypeptide reads, in one-letter code: D-alanine--D-alanine ligase (306 aa).

The region spanning 105–300 (KMIWQAAGIS…FDELVIQILE (196 aa)) is the ATP-grasp domain. 131 to 186 (TDRLGLPLIIKPAREGSTIGLNKVDYAQDMQSAYQTAAQHDSLVIAEQFIQGIELT) is a binding site for ATP. Aspartate 254, glutamate 267, and asparagine 269 together coordinate Mg(2+).

It belongs to the D-alanine--D-alanine ligase family. The cofactor is Mg(2+). Mn(2+) serves as cofactor.

Its subcellular location is the cytoplasm. It catalyses the reaction 2 D-alanine + ATP = D-alanyl-D-alanine + ADP + phosphate + H(+). It participates in cell wall biogenesis; peptidoglycan biosynthesis. Functionally, cell wall formation. The sequence is that of D-alanine--D-alanine ligase from Nitrosomonas eutropha (strain DSM 101675 / C91 / Nm57).